The chain runs to 255 residues: uncharacterized protein (255 aa).

Positions 1-23 are cleaved as a signal peptide; it reads MKRLNKLVLYISFLILVISFTAG. Cys-24 is lipidated: N-palmitoyl cysteine. A lipid anchor (S-diacylglycerol cysteine) is attached at Cys-24.

This sequence belongs to the staphylococcal tandem lipoprotein family.

The protein resides in the cell membrane. This is an uncharacterized protein from Staphylococcus aureus (strain NCTC 8325 / PS 47).